Consider the following 414-residue polypeptide: Enolase (414 aa).

Position 162 (Gln162) interacts with (2R)-2-phosphoglycerate. The active-site Proton donor is the Glu204. Positions 239, 280, and 307 each coordinate Mg(2+). Positions 332, 361, 362, and 383 each coordinate (2R)-2-phosphoglycerate. Lys332 (proton acceptor) is an active-site residue.

The protein belongs to the enolase family. Mg(2+) is required as a cofactor.

The protein resides in the cytoplasm. It localises to the secreted. It is found in the cell surface. The catalysed reaction is (2R)-2-phosphoglycerate = phosphoenolpyruvate + H2O. It functions in the pathway carbohydrate degradation; glycolysis; pyruvate from D-glyceraldehyde 3-phosphate: step 4/5. Functionally, catalyzes the reversible conversion of 2-phosphoglycerate (2-PG) into phosphoenolpyruvate (PEP). It is essential for the degradation of carbohydrates via glycolysis. The protein is Enolase of Campylobacter jejuni subsp. doylei (strain ATCC BAA-1458 / RM4099 / 269.97).